A 193-amino-acid chain; its full sequence is Achaete-scute homolog 2 (193 aa).

Disordered regions lie at residues 1 to 58 (MDSR…RNER) and 128 to 177 (PLPR…GALS). A bHLH domain is found at 50 to 102 (AAVARRNERERNRVKLVNLGFQALRQHVPHGGASKKLSKVETLRSAVEYIRAL). The span at 128–152 (PLPRAPSGTPATAASPSCASSSPGR) shows a compositional bias: low complexity.

Efficient DNA binding requires dimerization with another basic helix-loop-helix (bHLH) protein. Forms heterodimers with bHLH transcription factor TCF3. May not heterodimerise with bHLH protein HAND1. As to expression, expressed in placenta.

The protein localises to the nucleus. Its function is as follows. Transcription factor. Binds to E-box motifs 5'-CANNTG-3' in the regulatory elements of target genes, probably as a heterodimer with another basic helix-loop-helix (bHLH) protein such as the transcription factor TCF3. May bind both open and closed chromatin, acting as a pioneer transcription factor to allow other factors to bind and activate lineage-specific genes. Required during post-implantation development for the generation of some differentiated trophoblast cell types. Transcriptional activity of ASCL2 may be antagonised in a subset of trophoblast cells by bHLH transcription factor HAND1, perhaps by competing for dimerization with other bHLH proteins. Involved in differentiation and function of follicular T-helper (Tfh) cells, thereby playing a role in germinal center responses; probably modulates expression of genes involved in Tfh cell function, such as BCL6. May also act as a suppressor of Th1-, Th2- and Th17-cell differentiation. Induces the formation of stem cells in intestinal crypts in vitro, synergistically activating transcription of target genes, such as SOX9, together with TCF4/beta-catenin. May form a bistable transcriptional switch, controlling expression of its own gene together with Wnt/R-spondin signaling, and thereby maintaining stem cell characteristics. Modulates expression of target genes, including perhaps down-regulating EGR1/Krox24 and chemokine CXCL10/Mob-1 and up-regulating CXCR4 and CDKN1C/p57kip2, in Schwann cells. May play a role in reducing proliferation of Schwann cells, perhaps acting via modulation of expression of CDKN1C. May be dispensable for blastocyst formation and later embryonic function. May be involved in the determination of neuronal precursors. The polypeptide is Achaete-scute homolog 2 (ASCL2) (Bos taurus (Bovine)).